We begin with the raw amino-acid sequence, 421 residues long: Ig-like V-type domain-containing protein FAM187A (421 aa).

Positions 1-18 are cleaved as a signal peptide; the sequence is MNLAHTTVLLWAWGSLQA. The Extracellular segment spans residues 19-377; sequence FEIVEKENIF…VSFSDPETRA (359 aa). An Ig-like V-type domain is found at 268-362; sequence PWLPQVPIQF…IAGFRLGVTS (95 aa). A disulfide bridge links cysteine 290 with cysteine 346. Residue asparagine 318 is glycosylated (N-linked (GlcNAc...) asparagine). Residues 378–398 traverse the membrane as a helical segment; that stretch reads ALGLILIGYMLITVIFISIHL. At 399–421 the chain is on the cytoplasmic side; the sequence is CRCCCYLFRFCPNFSPRLSRPQL.

The protein belongs to the FAM187 family.

The protein localises to the membrane. In Bos taurus (Bovine), this protein is Ig-like V-type domain-containing protein FAM187A (FAM187A).